The sequence spans 261 residues: Ribosome-inactivating protein PD-L3/PD-L4 (261 aa).

N-linked (GlcNAc...) asparagine; in PD-L3 glycosylation is present at Asn-10. Intrachain disulfides connect Cys-34–Cys-258 and Cys-84–Cys-105. Glu-175 is an active-site residue.

Belongs to the ribosome-inactivating protein family. Type 1 RIP subfamily.

It carries out the reaction Endohydrolysis of the N-glycosidic bond at one specific adenosine on the 28S rRNA.. Its function is as follows. Inhibits protein synthesis. Does not cleave supercoiled pBR322 dsDNA. This is Ribosome-inactivating protein PD-L3/PD-L4 from Phytolacca dioica (Bella sombra tree).